The primary structure comprises 239 residues: Large ribosomal subunit protein uL30 (239 aa).

The disordered stretch occupies residues 1–22 (MEGVMSEAPQSSIRKKEYEARM).

This sequence belongs to the universal ribosomal protein uL30 family.

In Encephalitozoon cuniculi (strain GB-M1) (Microsporidian parasite), this protein is Large ribosomal subunit protein uL30 (RPL7).